The primary structure comprises 448 residues: Methionine aminopeptidase 2 (448 aa).

The segment at 1 to 94 (MAAQVTDALK…PRVLLSNLFP (94 aa)) is disordered. Residues 37-50 (AEAEDSDDDDEEPV) are compositionally biased toward acidic residues. Residues 61–74 (KKKRKRKKKPKKKA) are compositionally biased toward basic residues. Histidine 201 is a binding site for substrate. 3 residues coordinate a divalent metal cation: aspartate 221, aspartate 232, and histidine 301. Histidine 309 provides a ligand contact to substrate. 2 residues coordinate a divalent metal cation: glutamate 334 and glutamate 429.

It belongs to the peptidase M24A family. Methionine aminopeptidase eukaryotic type 2 subfamily. The cofactor is Co(2+). Zn(2+) is required as a cofactor. Mn(2+) serves as cofactor. It depends on Fe(2+) as a cofactor.

It localises to the cytoplasm. The catalysed reaction is Release of N-terminal amino acids, preferentially methionine, from peptides and arylamides.. Its function is as follows. Cotranslationally removes the N-terminal methionine from nascent proteins. The N-terminal methionine is often cleaved when the second residue in the primary sequence is small and uncharged (Met-Ala-, Cys, Gly, Pro, Ser, Thr, or Val). This is Methionine aminopeptidase 2 from Botryotinia fuckeliana (strain B05.10) (Noble rot fungus).